The sequence spans 354 residues: Glycerol-1-phosphate dehydrogenase [NAD(P)+] (354 aa).

NAD(+)-binding positions include Gly-102–Asp-106 and Thr-124–Ser-127. Asp-129 serves as a coordination point for substrate. Ser-133 contacts NAD(+). Asp-176 serves as a coordination point for substrate. Zn(2+) is bound by residues Asp-176 and His-256. His-260 serves as a coordination point for substrate. His-272 is a Zn(2+) binding site.

It belongs to the glycerol-1-phosphate dehydrogenase family. Zn(2+) is required as a cofactor.

It is found in the cytoplasm. The enzyme catalyses sn-glycerol 1-phosphate + NAD(+) = dihydroxyacetone phosphate + NADH + H(+). It catalyses the reaction sn-glycerol 1-phosphate + NADP(+) = dihydroxyacetone phosphate + NADPH + H(+). It participates in membrane lipid metabolism; glycerophospholipid metabolism. Its function is as follows. Catalyzes the NAD(P)H-dependent reduction of dihydroxyacetonephosphate (DHAP or glycerone phosphate) to glycerol 1-phosphate (G1P). The G1P thus generated is used as the glycerophosphate backbone of phospholipids in the cellular membranes of Archaea. The polypeptide is Glycerol-1-phosphate dehydrogenase [NAD(P)+] (Methanothrix thermoacetophila (strain DSM 6194 / JCM 14653 / NBRC 101360 / PT) (Methanosaeta thermophila)).